The chain runs to 283 residues: MIAKVINGKNIAKKIISKINLKIKKYSKLGMRPASLAMINVGNNPASKIYISNKEKICKKIGLISYLYNFSKNISEIDLINLIIKLNKNNLIDGILVQLPLPKEINKLNVLEKIIPKKDVDGFHPYNIGRLCQRKPTIVPCTPKGIIRLLKYYKINLLGLNAVVVGASNIVGRPMSLELLLEGCTVTITHRFTINLKKYIENAELLIVAIGKAEFIPGSWIKPGAIVIDVGINRLKSGKIVGDVNYEDAIEKASYITPVPGGIGPMTIAMLIENTMQIYINNY.

NADP(+)-binding positions include 166–168 (GAS) and Ile232.

This sequence belongs to the tetrahydrofolate dehydrogenase/cyclohydrolase family. In terms of assembly, homodimer.

It carries out the reaction (6R)-5,10-methylene-5,6,7,8-tetrahydrofolate + NADP(+) = (6R)-5,10-methenyltetrahydrofolate + NADPH. It catalyses the reaction (6R)-5,10-methenyltetrahydrofolate + H2O = (6R)-10-formyltetrahydrofolate + H(+). The protein operates within one-carbon metabolism; tetrahydrofolate interconversion. Its function is as follows. Catalyzes the oxidation of 5,10-methylenetetrahydrofolate to 5,10-methenyltetrahydrofolate and then the hydrolysis of 5,10-methenyltetrahydrofolate to 10-formyltetrahydrofolate. The chain is Bifunctional protein FolD from Wigglesworthia glossinidia brevipalpis.